The following is a 75-amino-acid chain: Meucin-49 (75 aa).

Residues 1-22 (MNKKILLVIFIVTMLIVDEVNS) form the signal peptide.

It belongs to the non-disulfide-bridged peptide (NDBP) superfamily. Long chain multifunctional peptide (group 2) family. As to expression, expressed by the venom gland.

The protein resides in the secreted. In terms of biological role, insecticidal toxin and antimicrobial peptide with potent activity against both Gram-negative and -positive bacteria, as well as against fungi. Acts by disrupting bacterial membrane integrity. Shows broad-spectrum and highly potent bactericidal activities against the Gram-positive bacteria B.cereus, B.megaterium, B.subtilis, M.luteus, S.aureus, S.epidermidis, S.warneri, S.griseus, S.scabiei, S.mutans, S.salivarius, and S.sanguinis. Also exhibits a wide spectrum of activity against the Gram-negative bacteria A.faecalis, E.coli, P.aeruginosa, P.solanacearum, S.enterica, S.marcescens, and S.maltophilia. Also shows antimicrobial activities against the fungal strains Aspergillus flavus, A.fumigatus, A.nidulans, A.niger, Beauveria bassiana, and Saccharomyces cerevisiae. Its antibiotic activity is potentiated by other antibacterial peptides such as MeuNaTxbeta-4. Also induces cytolysis on mice, lizards and birds erythrocytes. The polypeptide is Meucin-49 (Mesobuthus eupeus (Lesser Asian scorpion)).